We begin with the raw amino-acid sequence, 161 residues long: Nucleotide-binding protein BTH_I0730 (161 aa).

The protein belongs to the YajQ family.

Nucleotide-binding protein. The chain is Nucleotide-binding protein BTH_I0730 from Burkholderia thailandensis (strain ATCC 700388 / DSM 13276 / CCUG 48851 / CIP 106301 / E264).